We begin with the raw amino-acid sequence, 100 residues long: Putative insulin-like peptide beta-type 6 (100 aa).

Positions methionine 1 to alanine 18 are cleaved as a signal peptide. Intrachain disulfides connect cysteine 54–cysteine 83, cysteine 66–cysteine 96, cysteine 70–cysteine 97, and cysteine 82–cysteine 87.

Belongs to the insulin family.

The protein resides in the secreted. The chain is Putative insulin-like peptide beta-type 6 (ins-5) from Caenorhabditis elegans.